A 282-amino-acid chain; its full sequence is 3-methyl-2-oxobutanoate hydroxymethyltransferase (282 aa).

Residues Asp-44 and Asp-83 each coordinate Mg(2+). 3-methyl-2-oxobutanoate-binding positions include Asp-44–Ser-45, Asp-83, and Lys-112. Glu-114 serves as a coordination point for Mg(2+). The active-site Proton acceptor is the Glu-181.

The protein belongs to the PanB family. In terms of assembly, homodecamer; pentamer of dimers. Requires Mg(2+) as cofactor.

The protein localises to the cytoplasm. It carries out the reaction 3-methyl-2-oxobutanoate + (6R)-5,10-methylene-5,6,7,8-tetrahydrofolate + H2O = 2-dehydropantoate + (6S)-5,6,7,8-tetrahydrofolate. It participates in cofactor biosynthesis; coenzyme A biosynthesis. Its function is as follows. Catalyzes the reversible reaction in which hydroxymethyl group from 5,10-methylenetetrahydrofolate is transferred onto alpha-ketoisovalerate to form ketopantoate. This chain is 3-methyl-2-oxobutanoate hydroxymethyltransferase, found in Pyrococcus abyssi (strain GE5 / Orsay).